The following is a 467-amino-acid chain: Cysteine--tRNA ligase (467 aa).

A Zn(2+)-binding site is contributed by Cys-29. A 'HIGH' region motif is present at residues 31–41 (PTVYNYVHIGN). Cys-209, His-234, and Glu-238 together coordinate Zn(2+). Positions 267 to 271 (KMSKS) match the 'KMSKS' region motif. Lys-270 contributes to the ATP binding site.

Belongs to the class-I aminoacyl-tRNA synthetase family. In terms of assembly, monomer. Zn(2+) is required as a cofactor.

The protein localises to the cytoplasm. The enzyme catalyses tRNA(Cys) + L-cysteine + ATP = L-cysteinyl-tRNA(Cys) + AMP + diphosphate. The chain is Cysteine--tRNA ligase from Xylella fastidiosa (strain Temecula1 / ATCC 700964).